A 123-amino-acid polypeptide reads, in one-letter code: Small ribosomal subunit protein uS12 (123 aa).

The segment at 1–22 (MATINQLVRKPRKRKAKTSDVR) is disordered. A 3-methylthioaspartic acid modification is found at aspartate 89. Residues 101–123 (ALDTSGVNDRKRGRSKYGTKRPK) are disordered. Basic residues predominate over residues 111–123 (KRGRSKYGTKRPK).

Belongs to the universal ribosomal protein uS12 family. As to quaternary structure, part of the 30S ribosomal subunit. Contacts proteins S8 and S17. May interact with IF1 in the 30S initiation complex.

Its function is as follows. With S4 and S5 plays an important role in translational accuracy. Interacts with and stabilizes bases of the 16S rRNA that are involved in tRNA selection in the A site and with the mRNA backbone. Located at the interface of the 30S and 50S subunits, it traverses the body of the 30S subunit contacting proteins on the other side and probably holding the rRNA structure together. The combined cluster of proteins S8, S12 and S17 appears to hold together the shoulder and platform of the 30S subunit. The protein is Small ribosomal subunit protein uS12 of Teredinibacter turnerae (strain ATCC 39867 / T7901).